The primary structure comprises 501 residues: Cytochrome P450 81F4 (501 aa).

Lysine 245 participates in a covalent cross-link: Glycyl lysine isopeptide (Lys-Gly) (interchain with G-Cter in ubiquitin). A helical transmembrane segment spans residues 285 to 305 (IIIKGLMLGIMVASSETSALT). Position 435 (cysteine 435) interacts with heme.

It belongs to the cytochrome P450 family. Heme is required as a cofactor.

It is found in the membrane. Its pathway is secondary metabolite biosynthesis. In terms of biological role, involved in indole glucosinolate biosynthesis. Catalyzes hydroxylation reactions of the glucosinolate indole ring. Converts indol-3-yl-methylglucosinolate (I3M) to 1-hydroxy-indol-3-yl-methylglucosinolate (1OH-I3M) intermediate. This hydroxy intermediates is converted to 1-methoxy-indol-3-yl-methylglucosinolate (1MO-I3M) by indole glucosinolate methyltransferase 1 and 2 (IGMT1 and IGMT2). In Arabidopsis thaliana (Mouse-ear cress), this protein is Cytochrome P450 81F4.